The primary structure comprises 527 residues: Type-2 serine--tRNA ligase (527 aa).

Position 317 (A317) interacts with L-serine. C319 provides a ligand contact to Zn(2+). R349 is an L-serine binding site. ATP-binding positions include 349-351 (RWE) and 360-361 (RV). 366–368 (RIE) contributes to the L-serine binding site. Residues E368 and C478 each contribute to the Zn(2+) site. R485 contacts ATP.

Belongs to the class-II aminoacyl-tRNA synthetase family. Type-2 seryl-tRNA synthetase subfamily. Homodimer. Zn(2+) serves as cofactor.

The protein localises to the cytoplasm. It catalyses the reaction tRNA(Ser) + L-serine + ATP = L-seryl-tRNA(Ser) + AMP + diphosphate + H(+). The enzyme catalyses tRNA(Sec) + L-serine + ATP = L-seryl-tRNA(Sec) + AMP + diphosphate + H(+). It functions in the pathway aminoacyl-tRNA biosynthesis; selenocysteinyl-tRNA(Sec) biosynthesis; L-seryl-tRNA(Sec) from L-serine and tRNA(Sec): step 1/1. Its function is as follows. Catalyzes the attachment of serine to tRNA(Ser). Is also able to aminoacylate tRNA(Sec) with serine, to form the misacylated tRNA L-seryl-tRNA(Sec), which will be further converted into selenocysteinyl-tRNA(Sec). The sequence is that of Type-2 serine--tRNA ligase from Methanopyrus kandleri (strain AV19 / DSM 6324 / JCM 9639 / NBRC 100938).